An 807-amino-acid polypeptide reads, in one-letter code: Glycerol-3-phosphate acyltransferase (807 aa).

An HXXXXD motif motif is present at residues 308-313 (CHRSHM).

The protein belongs to the GPAT/DAPAT family.

It is found in the cell inner membrane. It carries out the reaction sn-glycerol 3-phosphate + an acyl-CoA = a 1-acyl-sn-glycero-3-phosphate + CoA. It participates in phospholipid metabolism; CDP-diacylglycerol biosynthesis; CDP-diacylglycerol from sn-glycerol 3-phosphate: step 1/3. This Shewanella baltica (strain OS223) protein is Glycerol-3-phosphate acyltransferase.